The sequence spans 193 residues: Potassium-transporting ATPase KdpC subunit (193 aa).

Residues 7–27 traverse the membrane as a helical segment; sequence PLVVLFVILTAVTGLAYPAVM.

It belongs to the KdpC family. In terms of assembly, the system is composed of three essential subunits: KdpA, KdpB and KdpC.

It is found in the cell inner membrane. In terms of biological role, part of the high-affinity ATP-driven potassium transport (or Kdp) system, which catalyzes the hydrolysis of ATP coupled with the electrogenic transport of potassium into the cytoplasm. This subunit acts as a catalytic chaperone that increases the ATP-binding affinity of the ATP-hydrolyzing subunit KdpB by the formation of a transient KdpB/KdpC/ATP ternary complex. The polypeptide is Potassium-transporting ATPase KdpC subunit (Burkholderia cenocepacia (strain ATCC BAA-245 / DSM 16553 / LMG 16656 / NCTC 13227 / J2315 / CF5610) (Burkholderia cepacia (strain J2315))).